We begin with the raw amino-acid sequence, 285 residues long: Neuralized-like protein 2 (285 aa).

The disordered stretch occupies residues 1–28; it reads MADPSEHVGLGGPRSPARPEPPPTRFHQ. The region spanning 23–244 is the NHR domain; it reads PTRFHQVHGA…STKSVRLVQL (222 aa). The region spanning 250–285 is the SOCS box domain; the sequence is SLQTLCRLVIHKRVVHRLAIDVLHLPKGLKDFCKYE.

Probable component the ECS(NEURL2) E3 ubiquitin-protein ligase complex consisting of ELOB/Elongin B, ELOC/Elongin C, CUL5, RBX1 and NEURL2. Interacts with CTNNB1. In terms of tissue distribution, expressed specifically in skeletal and cardiac muscles.

The protein resides in the cytoplasm. It participates in protein modification; protein ubiquitination. Plays an important role in the process of myofiber differentiation and maturation. Probable substrate-recognition component of a SCF-like ECS (Elongin BC-CUL2/5-SOCS-box protein) E3 ubiquitin-protein ligase complex, which mediates the ubiquitination of proteins. Probably contributes to catalysis through recognition and positioning of the substrate and the ubiquitin-conjugating enzyme. During myogenesis, controls the ubiquitination and degradation of the specific pool of CTNNB1/beta-catenin located at the sarcolemma. The chain is Neuralized-like protein 2 (Neurl2) from Mus musculus (Mouse).